Reading from the N-terminus, the 281-residue chain is Peptidyl-prolyl cis-trans isomerase CYP28, chloroplastic (281 aa).

Residues 1 to 24 constitute a chloroplast transit peptide; it reads MASSSILIPPILTRRNLLLSTTIA. The PPIase cyclophilin-type domain maps to 66–268; the sequence is STTPCSDSTP…KTVFISGCGE (203 aa).

It belongs to the cyclophilin-type PPIase family. In terms of processing, S-nytrosylated during the hypersensitive disease resistance response. As to expression, ubiquitous. Not detected in roots.

Its subcellular location is the plastid. The protein resides in the chloroplast. The enzyme catalyses [protein]-peptidylproline (omega=180) = [protein]-peptidylproline (omega=0). Functionally, PPIases accelerate the folding of proteins. It catalyzes the cis-trans isomerization of proline imidic peptide bonds in oligopeptides. The protein is Peptidyl-prolyl cis-trans isomerase CYP28, chloroplastic (CYP28) of Arabidopsis thaliana (Mouse-ear cress).